Consider the following 919-residue polypeptide: Kinesin-like protein KIN-6 (919 aa).

Residues 1–59 (MVRLSTKPPNPKVEMNLKEPPITGAGAGAAASPPAPSTLRRNPPRSARPPPTPLPNSKP) form a disordered region. The span at 28–45 (GAAASPPAPSTLRRNPPR) shows a compositional bias: low complexity. A compositionally biased stretch (pro residues) spans 46–56 (SARPPPTPLPN). Positions 72 to 415 (RLKVFLRIRP…LRQASPYMKI (344 aa)) constitute a Kinesin motor domain. 171–178 (GPTGSGKT) is an ATP binding site. 5 disordered regions span residues 591 to 615 (EEVS…TGTG), 674 to 700 (SESC…SFTD), 711 to 730 (SPQF…EEER), 737 to 764 (TTEG…EVNS), and 886 to 919 (KEEK…GRAQ). Over residues 597 to 612 (STGHGPERSSDYDDKT) the composition is skewed to basic and acidic residues. Residues 685 to 697 (HSSSSLDHPSDQS) are compositionally biased toward low complexity. The span at 755–764 (TPSCSQEVNS) shows a compositional bias: polar residues. The segment covering 886-912 (KEEKVKSSRDAMGRSDKLIRLLTDHPP) has biased composition (basic and acidic residues).

It belongs to the TRAFAC class myosin-kinesin ATPase superfamily. Kinesin family. KIN-6 subfamily.

The protein is Kinesin-like protein KIN-6 of Oryza sativa subsp. japonica (Rice).